Reading from the N-terminus, the 688-residue chain is MARLRSRTATTEKDATESSKVPVPRRRRGQHEDTEEPDTYGLEDDEKSSGRPFRILEKLPCSAEPPRYDVLTHALSVRDSAVLYNSLLASRRTWIKAEMFELYWSKQYMNMKERERMLKEGIDPDDIDQSAAREKMHKLCDGILTGGPHTLPVRLFILKNDEIEQKWQFMQESRKKEKEVRRKREAEEKERRREERKRLQQLKKERKLKEVEHTKKEKIERKRENDTERDQLRKGRKDNKGPSVLSRMGTTIKSKGLTTFSKAQQQEIDNQKMIANLNLLAQRDPALNKLMIAVANGQAPPADVERFKVFIERARNMEPPPNWKPRLSSRPVIKRTEEPTVEQQESASQTPSTPLPRKASPESSQVDNLSSPPHGSDPNSSFTEASMSDSRGELSETKSGGSLVPDSTGSSGQALDKGPTDASGSANDLSRPGATLSSTDGAPPLKQETIPVRDMGDKNADKPLEAHGAISEKGTTITIKAEEGTAPRQKRKYTKRKKEVEDEDKSMQLTTFQQKYLNGADILFEYLENSNMRFLFPKDAILEQLENEESYLMSWIVVHNKKEIEQFKLKVLKGLNKNKPNEEETEVQPCLFNVYEHPNCPEVLYTPMTVTLSNIPKKFTPIILNSVNPAESVRAYMSTILARGRRLNGFNLWYQLDAYDDKDLAESLRCELKEYEQGFKSKRQKKQL.

Disordered stretches follow at residues 1 to 48 (MARL…DEKS), 174 to 252 (RKKE…GTTI), 317 to 469 (MEPP…AHGA), and 483 to 504 (EGTA…EDED). A compositionally biased stretch (acidic residues) spans 33-46 (DTEEPDTYGLEDDE). Positions 168–225 (QFMQESRKKEKEVRRKREAEEKERRREERKRLQQLKKERKLKEVEHTKKEKIERKREN) form a coiled coil. Basic and acidic residues-rich tracts occupy residues 174–198 (RKKE…ERKR) and 207–233 (KLKE…DQLR). Polar residues-rich tracts occupy residues 341-352 (VEQQESASQTPS), 361-389 (PESS…SMSD), and 397-413 (TKSG…SSGQ). A compositionally biased stretch (basic and acidic residues) spans 454–465 (DMGDKNADKPLE). Residues 488–497 (RQKRKYTKRK) are compositionally biased toward basic residues.

The protein belongs to the SWC3 family. Component of the SWR1 chromatin remodeling complex.

It is found in the nucleus. Its function is as follows. Component of the SWR1 complex which mediates the ATP-dependent exchange of histone H2A for the H2A variant HZT1 leading to transcriptional regulation of selected genes by chromatin remodeling. Involved in chromosome stability. This chain is SWR1-complex protein 3 (SWC3), found in Eremothecium gossypii (strain ATCC 10895 / CBS 109.51 / FGSC 9923 / NRRL Y-1056) (Yeast).